Here is a 94-residue protein sequence, read N- to C-terminus: Large ribosomal subunit protein eL37 (94 aa).

Positions 19, 22, 34, and 37 each coordinate Zn(2+). The segment at 19 to 37 (CRRCGKATYHKQKLRCAAC) adopts a C4-type zinc-finger fold.

This sequence belongs to the eukaryotic ribosomal protein eL37 family. The cofactor is Zn(2+).

The protein localises to the cytoplasm. Its function is as follows. Binds to the 23S rRNA. This Tetrahymena thermophila (strain SB210) protein is Large ribosomal subunit protein eL37 (RPL37).